The chain runs to 201 residues: Recombination protein RecR (201 aa).

The segment at 60–75 adopts a C4-type zinc-finger fold; that stretch reads CSVCGNVDTSDPCTIC. The Toprim domain occupies 83–178; that stretch reads ATLIVVEDVS…RVTKLAHGVP (96 aa).

Belongs to the RecR family.

In terms of biological role, may play a role in DNA repair. It seems to be involved in an RecBC-independent recombinational process of DNA repair. It may act with RecF and RecO. This chain is Recombination protein RecR, found in Chelativorans sp. (strain BNC1).